An 892-amino-acid chain; its full sequence is Translation initiation factor IF-2 (892 aa).

The disordered stretch occupies residues 88–305; the sequence is KKRTFVKRDP…SLQQGFQKPA (218 aa). Composition is skewed to basic and acidic residues over residues 93–159 and 166–216; these read VKRD…KDKV and DMTK…EENK. Residues 254 to 269 are compositionally biased toward basic residues; that stretch reads GRGRNAKAARPAKKGK. Positions 270–282 are enriched in basic and acidic residues; sequence HAESKADREEARA. In terms of domain architecture, tr-type G spans 391–560; that stretch reads PRAPVVTIMG…LLQAEVLELK (170 aa). Residues 400 to 407 form a G1 region; it reads GHVDHGKT. 400 to 407 lines the GTP pocket; the sequence is GHVDHGKT. Positions 425 to 429 are G2; it reads GITQH. Positions 446-449 are G3; sequence DTPG. GTP-binding positions include 446–450 and 500–503; these read DTPGH and NKID. Positions 500-503 are G4; that stretch reads NKID. The G5 stretch occupies residues 536–538; the sequence is SAK.

Belongs to the TRAFAC class translation factor GTPase superfamily. Classic translation factor GTPase family. IF-2 subfamily.

It localises to the cytoplasm. Functionally, one of the essential components for the initiation of protein synthesis. Protects formylmethionyl-tRNA from spontaneous hydrolysis and promotes its binding to the 30S ribosomal subunits. Also involved in the hydrolysis of GTP during the formation of the 70S ribosomal complex. The sequence is that of Translation initiation factor IF-2 from Salmonella agona (strain SL483).